We begin with the raw amino-acid sequence, 91 residues long: YcgL domain-containing protein Sde_1339 (91 aa).

A YcgL domain is found at 1–85 (MIVDIYRSAK…PPESYMNEIP (85 aa)). Residues 72–91 (QMPPPPESYMNEIPNDKMPR) form a disordered region.

This chain is YcgL domain-containing protein Sde_1339, found in Saccharophagus degradans (strain 2-40 / ATCC 43961 / DSM 17024).